The following is a 515-amino-acid chain: Cytochrome P450 monooxygenase paxP (515 aa).

Residues 20–36 (SLLWKLGVFAVLVYFLL) traverse the membrane as a helical segment. Position 456 (cysteine 456) interacts with heme.

This sequence belongs to the cytochrome P450 family. Heme is required as a cofactor.

The protein resides in the membrane. The protein operates within secondary metabolite biosynthesis. Functionally, cytochrome P450 monooxygenase; part of the ATM2 gene cluster that mediates the biosynthesis of paxilline, a mycotoxin that acts as an inhibitor of mammalian maxi-K channels. PaxG, the geranylgeranyl diphosphate (GGPP) synthase is proposed to catalyze the first step in paxilline biosynthesis. Condensation of indole-3-glycerol phosphate with GGPP by paxC then forms 3-geranylgeranylindole (3-GGI), followed by epoxidation and cyclization of this intermediate (by paxM and paxB) to form paspaline. Paspaline is subsequently converted to 13-desoxypaxilline by paxP, the latter being then converted to paxilline by paxQ. Finally paxilline can be mono- and di-prenylated by paxD. PaxP can also utilized beta-paxitriol and alpha-PC-M6 as substrates converting them to paxilline. This chain is Cytochrome P450 monooxygenase paxP, found in Penicillium paxilli.